Reading from the N-terminus, the 103-residue chain is ATP-dependent Clp protease adapter protein ClpS 2 (103 aa).

The protein belongs to the ClpS family. As to quaternary structure, binds to the N-terminal domain of the chaperone ClpA.

Its function is as follows. Involved in the modulation of the specificity of the ClpAP-mediated ATP-dependent protein degradation. This is ATP-dependent Clp protease adapter protein ClpS 2 from Agrobacterium fabrum (strain C58 / ATCC 33970) (Agrobacterium tumefaciens (strain C58)).